A 239-amino-acid chain; its full sequence is Ribonuclease PH (239 aa).

Phosphate-binding positions include Arg86 and 124-126 (GTR).

This sequence belongs to the RNase PH family. As to quaternary structure, homohexameric ring arranged as a trimer of dimers.

It carries out the reaction tRNA(n+1) + phosphate = tRNA(n) + a ribonucleoside 5'-diphosphate. Its function is as follows. Phosphorolytic 3'-5' exoribonuclease that plays an important role in tRNA 3'-end maturation. Removes nucleotide residues following the 3'-CCA terminus of tRNAs; can also add nucleotides to the ends of RNA molecules by using nucleoside diphosphates as substrates, but this may not be physiologically important. Probably plays a role in initiation of 16S rRNA degradation (leading to ribosome degradation) during starvation. This chain is Ribonuclease PH, found in Anaeromyxobacter dehalogenans (strain 2CP-C).